A 438-amino-acid chain; its full sequence is Protein translocase subunit SecY (438 aa).

Residues 1–43 (MKIKPILELIPEVKRPLKGVSFKEKIQWTGLVLILYFILGTID) form a helical membrane-spanning segment. Residues 44-54 (IYMGGAEMPAM) are Extracellular-facing. Positions 55 to 62 (FAFWQTVT) form an intramembrane region, helical. A discontinuously helical transmembrane segment spans residues 55-83 (FAFWQTVTASKMGTLITLGIGPIVTAGII). The stretch at 63-74 (ASKMGTLITLGI) is an intramembrane region. Residues 75-83 (GPIVTAGII) constitute an intramembrane region (helical). Topologically, residues 84 to 104 (MQLLVGSELISLDLSKPMNRA) are cytoplasmic. A helical transmembrane segment spans residues 105-129 (LFQGLQKLFGIFLCFLEAVMFVGAG). At 130–136 (AFGVVNS) the chain is on the extracellular side. A helical membrane pass occupies residues 137-161 (TLALILVLQLALGAILVIYLDEIVS). At 162–167 (RYGIGS) the chain is on the cytoplasmic side. A helical membrane pass occupies residues 168-186 (GIGLFIAAGVAQTIFVGAF). At 187–209 (GAEGYLWKFFSAMSVGSLGIAFE) the chain is on the extracellular side. A helical transmembrane segment spans residues 210 to 231 (YILPILSTLFVFLVVVYVESIR). Over 232-256 (VEIPLAHGRVKGAVGKYPIKFIYVS) the chain is Cytoplasmic. The helical transmembrane segment at 257–278 (NLPVILAAALFANIQLWGMFLD) threads the bilayer. Over 279-315 (RMGYPILGQYSNGTAVSGIAYYFSTPYGISNIISDPL) the chain is Extracellular. A helical membrane pass occupies residues 316–335 (HAIFYTLMMVIFCILFGLFW). The Cytoplasmic portion of the chain corresponds to 336–378 (VETSGLDAKSMAKKLGNLDMAIKGFRKSQKSIEQRLKRYIKPI). A helical membrane pass occupies residues 379–397 (TVMGSAFVGFLAAAADFTG). Residues 398–400 (ALG) lie on the Extracellular side of the membrane. A helical membrane pass occupies residues 401–415 (GGTGVLLTVSIVYRL). The Cytoplasmic portion of the chain corresponds to 416–438 (YEQLVQEQLSELHPAVAKFVGKR).

Belongs to the SecY/SEC61-alpha family. In terms of assembly, component of the Sec protein translocase complex. Heterotrimer consisting of alpha (SecY), beta (SecG) and gamma (SecE) subunits. The heterotrimers can form oligomers, although 1 heterotrimer is thought to be able to translocate proteins. Interacts with the ribosome. May interact with SecDF, and other proteins may be involved.

It is found in the cell membrane. Functionally, the central subunit of the protein translocation channel SecYEG. Consists of two halves formed by TMs 1-5 and 6-10. These two domains form a lateral gate at the front which open onto the bilayer between TMs 2 and 7, and are clamped together by SecE at the back. The channel is closed by both a pore ring composed of hydrophobic SecY resides and a short helix (helix 2A) on the extracellular side of the membrane which forms a plug. The plug probably moves laterally to allow the channel to open. The ring and the pore may move independently. The polypeptide is Protein translocase subunit SecY (Methanococcus vannielii).